A 430-amino-acid polypeptide reads, in one-letter code: Solanesyl-diphosphate synthase 1, mitochondrial (430 aa).

The N-terminal 31 residues, 1-31 (MSWRWALARRVAALGATSGGGDGATAQAQRL), are a transit peptide targeting the mitochondrion. Positions 133, 136, and 182 each coordinate isopentenyl diphosphate. Mg(2+)-binding residues include aspartate 189 and aspartate 193. Arginine 198 contributes to the an all-trans-polyprenyl diphosphate binding site. Residue arginine 199 participates in isopentenyl diphosphate binding. Positions 275, 276, 313, and 330 each coordinate an all-trans-polyprenyl diphosphate.

Belongs to the FPP/GGPP synthase family. Homodimer. Requires Mg(2+) as cofactor. In terms of tissue distribution, expressed in leaves, stems and roots. Highest expression in roots.

The protein localises to the mitochondrion. It catalyses the reaction 7 isopentenyl diphosphate + (2E)-geranyl diphosphate = all-trans-nonaprenyl diphosphate + 7 diphosphate. The protein operates within cofactor biosynthesis; ubiquinone biosynthesis. Its function is as follows. Involved in the supply of solanesyl diphosphate for ubiquinone-9 (UQ-9) biosynthesis in mitochondria. Farnesyl diphosphate is the preferred substrate. This Oryza sativa subsp. japonica (Rice) protein is Solanesyl-diphosphate synthase 1, mitochondrial.